A 261-amino-acid polypeptide reads, in one-letter code: Syntaxin-7 (261 aa).

At Ser2 the chain carries N-acetylserine. The Cytoplasmic segment spans residues 2–238 (SYTPGVGGDP…DYQRKSRKTL (237 aa)). At Thr4 the chain carries Phosphothreonine. A Phosphoserine modification is found at Ser45. Positions 47–69 (ELRQQLQQKQQYTNQLTKETDKY) form a coiled coil. Ser75 is modified (phosphoserine). Thr79 is subject to Phosphothreonine. Ser125, Ser126, Ser129, and Ser205 each carry phosphoserine. A disordered region spans residues 129–148 (SGSFPEDSSKERNLVSWESQ). Residues 165 to 227 (LRLIHERESS…QQANQQLSRA (63 aa)) enclose the t-SNARE coiled-coil homology domain. Residues 239 to 259 (CIIILILVIGVVIIGLIIWGL) traverse the membrane as a helical; Anchor for type IV membrane protein segment. Residues 260-261 (NR) are Vesicular-facing.

The protein belongs to the syntaxin family. In terms of assembly, forms a SNARE complex with VTI1B, STX8 and VAMP8 which functions in the homotypic fusion of late endosomes. Component of the SNARE complex composed of STX7, STX8, VAMP7 and VTI1B that is required for heterotypic fusion of late endosomes with lysosomes. Interacts with VPS11, VPS16 and VPS18. Interacts with VPS33A. Interacts with TPC1.

It localises to the early endosome membrane. Its function is as follows. May be involved in protein trafficking from the plasma membrane to the early endosome (EE) as well as in homotypic fusion of endocytic organelles. Mediates the endocytic trafficking from early endosomes to late endosomes and lysosomes. This chain is Syntaxin-7 (STX7), found in Pongo abelii (Sumatran orangutan).